Reading from the N-terminus, the 222-residue chain is Mediator of RNA polymerase II transcription subunit 7 (222 aa).

The tract at residues 34-55 (YKEKKAASAKQTAPNNSNGGSE) is disordered. Positions 42-53 (AKQTAPNNSNGG) are enriched in polar residues.

It belongs to the Mediator complex subunit 7 family. In terms of assembly, component of the Mediator complex, which is composed of at least 21 subunits that form three structurally distinct submodules. The Mediator head module contains MED6, MED8, MED11, SRB4/MED17, SRB5/MED18, ROX3/MED19, SRB2/MED20 and SRB6/MED22, the middle module contains MED1, MED4, NUT1/MED5, MED7, CSE2/MED9, NUT2/MED10, SRB7/MED21 and SOH1/MED31, and the tail module contains MED2, PGD1/MED3, RGR1/MED14, GAL11/MED15 and SIN4/MED16. The head and the middle modules interact directly with RNA polymerase II, whereas the elongated tail module interacts with gene-specific regulatory proteins. MED7 interacts directly with MED1, MED4 and SRB7/MED21.

The protein resides in the nucleus. In terms of biological role, component of the Mediator complex, a coactivator involved in the regulated transcription of nearly all RNA polymerase II-dependent genes. Mediator functions as a bridge to convey information from gene-specific regulatory proteins to the basal RNA polymerase II transcription machinery. The Mediator complex, having a compact conformation in its free form, is recruited to promoters by direct interactions with regulatory proteins and serves for the assembly of a functional preinitiation complex with RNA polymerase II and the general transcription factors. The Mediator complex unfolds to an extended conformation and partially surrounds RNA polymerase II, specifically interacting with the unphosphorylated form of the C-terminal domain (CTD) of RNA polymerase II. The Mediator complex dissociates from the RNA polymerase II holoenzyme and stays at the promoter when transcriptional elongation begins. The protein is Mediator of RNA polymerase II transcription subunit 7 (MED7) of Saccharomyces cerevisiae (strain ATCC 204508 / S288c) (Baker's yeast).